Consider the following 157-residue polypeptide: Small ribosomal subunit protein uS17 (157 aa).

This sequence belongs to the universal ribosomal protein uS17 family.

In Dunaliella tertiolecta (Green alga), this protein is Small ribosomal subunit protein uS17 (RPS11).